The sequence spans 345 residues: Serine/arginine-rich splicing factor 6 (345 aa).

The RRM 1 domain maps to 1-72 (MPRVYIGRLS…ERVIVEHARG (72 aa)). A phosphoserine mark is found at Ser45, Ser81, and Ser84. The segment at 75-102 (RDRDGYSYGSRSGGGGYSSRRTSGRDKY) is disordered. One can recognise an RRM 2 domain in the interval 110–183 (FRLIVENLSS…RNIRLIEDKP (74 aa)). The residue at position 165 (Lys165) is an N6-acetyllysine. Residues 176–345 (IRLIEDKPRT…RSRSRSSSRD (170 aa)) are disordered. Lys182 is covalently cross-linked (Glycyl lysine isopeptide (Lys-Gly) (interchain with G-Cter in SUMO2)). Residues 185–250 (TSHRRSYSGS…RKSRSKSKSK (66 aa)) are compositionally biased toward basic residues. 2 stretches are compositionally biased toward basic and acidic residues: residues 264–273 (RSKDEYEKSR) and 282–293 (SPKENGKGDIKS). Residues Ser299 and Ser301 each carry the phosphoserine modification. Position 305 is a phosphoserine; by DYRK1A (Ser305). A phosphoserine mark is found at Ser316 and Ser318. The segment covering 323-345 (RASRSHSRSRSKSRSRSRSSSRD) has biased composition (basic residues).

This sequence belongs to the splicing factor SR family. In terms of assembly, binds SREK1/SFRS12. Interacts with DYRK1A. Extensively phosphorylated on serine residues in the RS domain. Phosphorylated by DYRK1A, probably in the RS domain. Phosphorylation by DYRK1A modulates alternative splice site selection and inhibits the expression of MAPT/Tau exon 10.

It is found in the nucleus. The protein resides in the nucleus speckle. Its function is as follows. Plays a role in constitutive splicing and modulates the selection of alternative splice sites. Plays a role in the alternative splicing of MAPT/Tau exon 10. Binds to alternative exons of TNC pre-mRNA and promotes the expression of alternatively spliced TNC. Plays a role in wound healing and in the regulation of keratinocyte differentiation and proliferation via its role in alternative splicing. The sequence is that of Serine/arginine-rich splicing factor 6 (SRSF6) from Bos taurus (Bovine).